The chain runs to 477 residues: Aryl-phospho-beta-D-glucosidase BglC (477 aa).

Catalysis depends on Glu170, which acts as the Proton donor. Catalysis depends on Glu378, which acts as the Nucleophile.

This sequence belongs to the glycosyl hydrolase 1 family.

It carries out the reaction 6-phospho-beta-D-glucosyl-(1-&gt;4)-D-glucose + H2O = D-glucose 6-phosphate + D-glucose. In terms of biological role, is able to catalyze the hydrolysis of aryl-phospho-beta-D-glucosides such as 4-methylumbelliferyl-phospho-beta-D-glucopyranoside (MUG-P), phosphoarbutin and phosphosalicin. Is not essential for growth on arbutin and salicin as the sole carbon source. The polypeptide is Aryl-phospho-beta-D-glucosidase BglC (bglC) (Bacillus subtilis (strain 168)).